A 286-amino-acid polypeptide reads, in one-letter code: Phosphatidylglycerol--prolipoprotein diacylglyceryl transferase (286 aa).

Transmembrane regions (helical) follow at residues 25-45 (WYAL…RMLL), 65-85 (FILW…VLFY), 103-123 (GGMS…LFGW), and 127-147 (VPIL…LFLG). An a 1,2-diacyl-sn-glycero-3-phospho-(1'-sn-glycerol)-binding site is contributed by Arg-148. The next 3 membrane-spanning stretches (helical) occupy residues 188–208 (AGLE…AGAL), 212–232 (GLII…GEFF), and 248–268 (MGML…ITTW).

It belongs to the Lgt family.

The protein resides in the cell inner membrane. It carries out the reaction L-cysteinyl-[prolipoprotein] + a 1,2-diacyl-sn-glycero-3-phospho-(1'-sn-glycerol) = an S-1,2-diacyl-sn-glyceryl-L-cysteinyl-[prolipoprotein] + sn-glycerol 1-phosphate + H(+). It participates in protein modification; lipoprotein biosynthesis (diacylglyceryl transfer). Functionally, catalyzes the transfer of the diacylglyceryl group from phosphatidylglycerol to the sulfhydryl group of the N-terminal cysteine of a prolipoprotein, the first step in the formation of mature lipoproteins. In Rhodopseudomonas palustris (strain ATCC BAA-98 / CGA009), this protein is Phosphatidylglycerol--prolipoprotein diacylglyceryl transferase.